The sequence spans 121 residues: Piercer of microtubule wall 2 protein (121 aa).

Residues 1–10 are compositionally biased toward basic and acidic residues; it reads MTDRNRDKKS. A disordered region spans residues 1-29; that stretch reads MTDRNRDKKSTSPSNSDTEMKSEQLPPCV.

The protein belongs to the PIERCE2 family. As to quaternary structure, microtubule inner protein component of sperm flagellar doublet microtubules. Interacts with CFAP53, ODAD1 and ODAD3; the interactions link the outer dynein arms docking complex (ODA-DC) to the internal microtubule inner proteins (MIP) in cilium axoneme. Expressed in airway epithelial cells.

Its subcellular location is the cytoplasm. It is found in the cytoskeleton. The protein resides in the cilium axoneme. The protein localises to the flagellum axoneme. Microtubule inner protein involved in the attachment of outer dynein arms (ODAs) to dynein-decorated doublet microtubules (DMTs) in cilia axoneme, which is required for motile cilia beating. This chain is Piercer of microtubule wall 2 protein, found in Homo sapiens (Human).